Reading from the N-terminus, the 424-residue chain is CinA-like protein (424 aa).

The protein belongs to the CinA family.

This Nostoc sp. (strain PCC 7120 / SAG 25.82 / UTEX 2576) protein is CinA-like protein.